The primary structure comprises 97 residues: Putative septation protein SpoVG (97 aa).

The protein belongs to the SpoVG family.

Could be involved in septation. The sequence is that of Putative septation protein SpoVG from Borreliella afzelii (strain PKo) (Borrelia afzelii).